A 133-amino-acid polypeptide reads, in one-letter code: Small ribosomal subunit protein uS8 (133 aa).

The protein belongs to the universal ribosomal protein uS8 family. Part of the 30S ribosomal subunit. Contacts proteins S5 and S12.

One of the primary rRNA binding proteins, it binds directly to 16S rRNA central domain where it helps coordinate assembly of the platform of the 30S subunit. This Cyanothece sp. (strain PCC 7425 / ATCC 29141) protein is Small ribosomal subunit protein uS8.